A 154-amino-acid polypeptide reads, in one-letter code: Myoglobin (154 aa).

Residues 2–148 (GLSDGEWHLV…FRNDIAAKIK (147 aa)) enclose the Globin domain. Residue S4 is modified to Phosphoserine. H65 provides a ligand contact to nitrite. Position 65 (H65) interacts with O2. T68 carries the phosphothreonine modification. Heme b is bound at residue H94.

Belongs to the globin family. Monomeric.

Its subcellular location is the cytoplasm. The protein resides in the sarcoplasm. The catalysed reaction is Fe(III)-heme b-[protein] + nitric oxide + H2O = Fe(II)-heme b-[protein] + nitrite + 2 H(+). It catalyses the reaction H2O2 + AH2 = A + 2 H2O. Monomeric heme protein which primary function is to store oxygen and facilitate its diffusion within muscle tissues. Reversibly binds oxygen through a pentacoordinated heme iron and enables its timely and efficient release as needed during periods of heightened demand. Depending on the oxidative conditions of tissues and cells, and in addition to its ability to bind oxygen, it also has a nitrite reductase activity whereby it regulates the production of bioactive nitric oxide. Under stress conditions, like hypoxia and anoxia, it also protects cells against reactive oxygen species thanks to its pseudoperoxidase activity. In Pusa sibirica (Baikal seal), this protein is Myoglobin (MB).